Here is a 170-residue protein sequence, read N- to C-terminus: tRNA-splicing endonuclease (170 aa).

Active-site residues include Tyr-106, His-116, and Lys-147.

It belongs to the tRNA-intron endonuclease family. Archaeal short subfamily. As to quaternary structure, homotetramer; although the tetramer contains four active sites, only two participate in the cleavage. Therefore, it should be considered as a dimer of dimers.

It catalyses the reaction pretRNA = a 3'-half-tRNA molecule with a 5'-OH end + a 5'-half-tRNA molecule with a 2',3'-cyclic phosphate end + an intron with a 2',3'-cyclic phosphate and a 5'-hydroxyl terminus.. Its function is as follows. Endonuclease that removes tRNA introns. Cleaves pre-tRNA at the 5'- and 3'-splice sites to release the intron. The products are an intron and two tRNA half-molecules bearing 2',3' cyclic phosphate and 5'-OH termini. Recognizes a pseudosymmetric substrate in which 2 bulged loops of 3 bases are separated by a stem of 4 bp. The polypeptide is tRNA-splicing endonuclease (Methanothermobacter thermautotrophicus (strain ATCC 29096 / DSM 1053 / JCM 10044 / NBRC 100330 / Delta H) (Methanobacterium thermoautotrophicum)).